The primary structure comprises 304 residues: N-acetyl-D-glucosamine kinase (304 aa).

Residues 4–11 and 133–140 each bind ATP; these read GFDMGGTK and GLGGGLVI. Positions 157, 177, 179, and 184 each coordinate Zn(2+).

This sequence belongs to the ROK (NagC/XylR) family. NagK subfamily.

It carries out the reaction N-acetyl-D-glucosamine + ATP = N-acetyl-D-glucosamine 6-phosphate + ADP + H(+). It participates in cell wall biogenesis; peptidoglycan recycling. Catalyzes the phosphorylation of N-acetyl-D-glucosamine (GlcNAc) derived from cell-wall degradation, yielding GlcNAc-6-P. This chain is N-acetyl-D-glucosamine kinase, found in Pectobacterium atrosepticum (strain SCRI 1043 / ATCC BAA-672) (Erwinia carotovora subsp. atroseptica).